The following is a 335-amino-acid chain: Pyridoxal 5'-phosphate synthase subunit PdxS (335 aa).

A D-ribose 5-phosphate-binding site is contributed by D30. K87 functions as the Schiff-base intermediate with D-ribose 5-phosphate in the catalytic mechanism. A D-ribose 5-phosphate-binding site is contributed by G159. R171 is a binding site for D-glyceraldehyde 3-phosphate. D-ribose 5-phosphate is bound by residues G257 and 278-279 (GS).

Belongs to the PdxS/SNZ family. In the presence of PdxT, forms a dodecamer of heterodimers.

It carries out the reaction aldehydo-D-ribose 5-phosphate + D-glyceraldehyde 3-phosphate + L-glutamine = pyridoxal 5'-phosphate + L-glutamate + phosphate + 3 H2O + H(+). The protein operates within cofactor biosynthesis; pyridoxal 5'-phosphate biosynthesis. Its function is as follows. Catalyzes the formation of pyridoxal 5'-phosphate from ribose 5-phosphate (RBP), glyceraldehyde 3-phosphate (G3P) and ammonia. The ammonia is provided by the PdxT subunit. Can also use ribulose 5-phosphate and dihydroxyacetone phosphate as substrates, resulting from enzyme-catalyzed isomerization of RBP and G3P, respectively. In Thermococcus kodakarensis (strain ATCC BAA-918 / JCM 12380 / KOD1) (Pyrococcus kodakaraensis (strain KOD1)), this protein is Pyridoxal 5'-phosphate synthase subunit PdxS.